The following is a 123-amino-acid chain: WAP four-disulfide core domain protein 5 (123 aa).

The N-terminal stretch at 1–24 (MRIQSLLLLGALLAVGSQPPAAFG) is a signal peptide. WAP domains follow at residues 27-73 (KGEK…CVPR) and 74-121 (VSVK…RDPA). 8 cysteine pairs are disulfide-bonded: cysteine 34–cysteine 62, cysteine 41–cysteine 66, cysteine 49–cysteine 61, cysteine 55–cysteine 70, cysteine 81–cysteine 109, cysteine 88–cysteine 113, cysteine 96–cysteine 108, and cysteine 102–cysteine 117.

Its subcellular location is the secreted. In terms of biological role, putative acid-stable proteinase inhibitor. The sequence is that of WAP four-disulfide core domain protein 5 (WFDC5) from Saimiri boliviensis boliviensis (Bolivian squirrel monkey).